The following is a 455-amino-acid chain: Ribulose bisphosphate carboxylase large chain (455 aa).

Position 5 is an N6,N6,N6-trimethyllysine (lysine 5). Substrate is bound by residues asparagine 114 and threonine 164. Lysine 166 functions as the Proton acceptor in the catalytic mechanism. A substrate-binding site is contributed by lysine 168. Positions 192, 194, and 195 each coordinate Mg(2+). The residue at position 192 (lysine 192) is an N6-carboxylysine. Histidine 285 acts as the Proton acceptor in catalysis. Residues arginine 286, histidine 318, and serine 370 each coordinate substrate.

Belongs to the RuBisCO large chain family. Type I subfamily. Heterohexadecamer of 8 large chains and 8 small chains; disulfide-linked. The disulfide link is formed within the large subunit homodimers. Mg(2+) is required as a cofactor. In terms of processing, the disulfide bond which can form in the large chain dimeric partners within the hexadecamer appears to be associated with oxidative stress and protein turnover.

Its subcellular location is the plastid. It is found in the chloroplast. It catalyses the reaction 2 (2R)-3-phosphoglycerate + 2 H(+) = D-ribulose 1,5-bisphosphate + CO2 + H2O. The catalysed reaction is D-ribulose 1,5-bisphosphate + O2 = 2-phosphoglycolate + (2R)-3-phosphoglycerate + 2 H(+). In terms of biological role, ruBisCO catalyzes two reactions: the carboxylation of D-ribulose 1,5-bisphosphate, the primary event in carbon dioxide fixation, as well as the oxidative fragmentation of the pentose substrate in the photorespiration process. Both reactions occur simultaneously and in competition at the same active site. The sequence is that of Ribulose bisphosphate carboxylase large chain from Lupinus paraguariensis (Lupine).